A 173-amino-acid polypeptide reads, in one-letter code: Large ribosomal subunit protein uL16 (173 aa).

Belongs to the universal ribosomal protein uL16 family.

The chain is Large ribosomal subunit protein uL16 from Methanosarcina acetivorans (strain ATCC 35395 / DSM 2834 / JCM 12185 / C2A).